Here is a 306-residue protein sequence, read N- to C-terminus: Prophage bactoprenol glucosyl transferase homolog (306 aa).

The Cytoplasmic segment spans residues 1 to 227 (MKISLVVPVF…ITSFSTFPLR (227 aa)). The helical transmembrane segment at 228–248 (IWTYIGLVVASVAFIYGAWMI) threads the bilayer. The Periplasmic segment spans residues 249–262 (LDTIIFGNAVRGYP). The chain crosses the membrane as a helical span at residues 263–283 (SLLVSILFLGGIQMIGIGVLG). Residues 284–306 (EYIGRTYIETKKRPKYIIKRVKK) lie on the Cytoplasmic side of the membrane.

The protein belongs to the glycosyltransferase 2 family. GtrB subfamily.

It is found in the cell inner membrane. In terms of biological role, involved in O antigen modification. Catalyzes the transfer of the glucose residue from UDP-glucose to a lipid carrier. In Escherichia coli (strain K12), this protein is Prophage bactoprenol glucosyl transferase homolog (yfdH).